Consider the following 135-residue polypeptide: NADPH-dependent 7-cyano-7-deazaguanine reductase (135 aa).

C48 functions as the Thioimide intermediate in the catalytic mechanism. D55 acts as the Proton donor in catalysis. Substrate contacts are provided by residues 70 to 72 and 89 to 90; these read IEL and HE.

The protein belongs to the GTP cyclohydrolase I family. QueF type 1 subfamily.

The protein localises to the cytoplasm. It catalyses the reaction 7-aminomethyl-7-carbaguanine + 2 NADP(+) = 7-cyano-7-deazaguanine + 2 NADPH + 3 H(+). The protein operates within tRNA modification; tRNA-queuosine biosynthesis. Functionally, catalyzes the NADPH-dependent reduction of 7-cyano-7-deazaguanine (preQ0) to 7-aminomethyl-7-deazaguanine (preQ1). The chain is NADPH-dependent 7-cyano-7-deazaguanine reductase from Prochlorococcus marinus (strain MIT 9313).